The primary structure comprises 1231 residues: Cohesin subunit SA-2 (1231 aa).

Methionine 1 is modified (N-acetylmethionine). Positions 1 to 75 (MIAAPEIPTD…GSNRMNGHHQ (75 aa)) are disordered. Over residues 36–48 (KQGKGKTCKKGKK) the composition is skewed to basic residues. The region spanning 293 to 378 (FVHRYRDAIA…SRFKDRIVSM (86 aa)) is the SCD domain. Position 607 is an N6-acetyllysine (lysine 607). Phosphoserine is present on residues serine 1058, serine 1061, serine 1064, and serine 1065. The interval 1062-1087 (GMSSRGSTVRSKKSKPSTGKRKVVEG) is disordered. Positions 1071 to 1082 (RSKKSKPSTGKR) are enriched in basic residues. Phosphothreonine is present on threonine 1112. Phosphoserine is present on residues serine 1177 and serine 1178.

The protein belongs to the SCC3 family. As to quaternary structure, interacts directly with RAD21 in cohesin complex. Cohesin complexes are composed of a heterodimer between a SMC1 protein (SMC1A or SMC1B) and SMC3, which are attached via their hinge domain, and RAD21 which link them at their heads, and one STAG protein (STAG1, STAG2 or STAG3). In cohesin complexes, STAG2 is mutually exclusive with STAG1 and STAG3. Phosphorylated by PLK1. The large dissociation of cohesin from chromosome arms during prophase is partly due to its phosphorylation.

It localises to the nucleus. The protein resides in the chromosome. The protein localises to the centromere. Its function is as follows. Component of cohesin complex, a complex required for the cohesion of sister chromatids after DNA replication. The cohesin complex apparently forms a large proteinaceous ring within which sister chromatids can be trapped. At anaphase, the complex is cleaved and dissociates from chromatin, allowing sister chromatids to segregate. The cohesin complex may also play a role in spindle pole assembly during mitosis. This is Cohesin subunit SA-2 (Stag2) from Mus musculus (Mouse).